A 276-amino-acid chain; its full sequence is Urease accessory protein UreD (276 aa).

It belongs to the UreD family. In terms of assembly, ureD, UreF and UreG form a complex that acts as a GTP-hydrolysis-dependent molecular chaperone, activating the urease apoprotein by helping to assemble the nickel containing metallocenter of UreC. The UreE protein probably delivers the nickel.

It is found in the cytoplasm. Functionally, required for maturation of urease via the functional incorporation of the urease nickel metallocenter. The polypeptide is Urease accessory protein UreD (Bradyrhizobium diazoefficiens (strain JCM 10833 / BCRC 13528 / IAM 13628 / NBRC 14792 / USDA 110)).